A 313-amino-acid polypeptide reads, in one-letter code: Protein PALE CRESS, chloroplastic (313 aa).

Residues 1-22 (MAATSLVLTCASPLFSSPRVIS) constitute a chloroplast transit peptide.

In terms of tissue distribution, expressed in green tissues, including leaves. Accumulates in chloroplasts of mature stomatal guard cells.

The protein localises to the plastid. It is found in the chloroplast. It localises to the chromoplast. The protein resides in the etioplast. Its subcellular location is the amyloplast. Its function is as follows. Required for the differentiation of chloroplast from proplastids or etioplasts, probably by modulating some chloroplast-encoded genes expression and mRNA maturation. Involved in leaf-cells differentiation. The chain is Protein PALE CRESS, chloroplastic (PAC) from Arabidopsis thaliana (Mouse-ear cress).